Reading from the N-terminus, the 475-residue chain is GTPase Der (475 aa).

EngA-type G domains follow at residues 2-166 (LRIA…NIPE) and 213-386 (LKIA…ETVS). GTP is bound by residues 8-15 (GRPNVGKS), 55-59 (DTGGV), 118-121 (NKAD), 219-226 (GRPNVGKS), 266-270 (DTAGL), and 331-334 (NKWD). Positions 387 to 471 (RKVPTPVVNK…PFDLEIKEKA (85 aa)) constitute a KH-like domain.

The protein belongs to the TRAFAC class TrmE-Era-EngA-EngB-Septin-like GTPase superfamily. EngA (Der) GTPase family. As to quaternary structure, associates with the 50S ribosomal subunit.

In terms of biological role, GTPase that plays an essential role in the late steps of ribosome biogenesis. The polypeptide is GTPase Der (Chlamydia felis (strain Fe/C-56) (Chlamydophila felis)).